We begin with the raw amino-acid sequence, 64 residues long: Frontoxin IV (64 aa).

Disulfide bonds link cysteine 3-cysteine 24, cysteine 6-cysteine 11, cysteine 17-cysteine 41, cysteine 45-cysteine 57, and cysteine 58-cysteine 63.

In terms of tissue distribution, expressed by the venom gland.

The protein localises to the secreted. Functionally, produces peripheral paralysis by blocking neuromuscular transmission at the postsynaptic site. Binds to the muscular nicotinic acetylcholine receptor (nAChR). The chain is Frontoxin IV from Micrurus frontalis (Coral snake).